A 189-amino-acid polypeptide reads, in one-letter code: Thymidylate kinase (189 aa).

Position 7 to 14 (7 to 14 (GIDTAGKS)) interacts with ATP.

It belongs to the thymidylate kinase family.

It carries out the reaction dTMP + ATP = dTDP + ADP. Its function is as follows. Phosphorylation of dTMP to form dTDP in both de novo and salvage pathways of dTTP synthesis. This is Thymidylate kinase from Aliarcobacter butzleri (strain RM4018) (Arcobacter butzleri).